A 178-amino-acid polypeptide reads, in one-letter code: Interleukin-10 (178 aa).

The first 18 residues, 1-18 (MHSSALLCCLVVLTGVRA), serve as a signal peptide directing secretion. 2 disulfide bridges follow: cysteine 30–cysteine 126 and cysteine 80–cysteine 132. Asparagine 134 carries N-linked (GlcNAc...) asparagine glycosylation.

This sequence belongs to the IL-10 family. As to quaternary structure, homodimer. Interacts with IL10RA and IL10RB.

It localises to the secreted. Its function is as follows. Major immune regulatory cytokine that acts on many cells of the immune system where it has profound anti-inflammatory functions, limiting excessive tissue disruption caused by inflammation. Mechanistically, IL10 binds to its heterotetrameric receptor comprising IL10RA and IL10RB leading to JAK1 and STAT2-mediated phosphorylation of STAT3. In turn, STAT3 translocates to the nucleus where it drives expression of anti-inflammatory mediators. Targets antigen-presenting cells (APCs) such as macrophages and monocytes and inhibits their release of pro-inflammatory cytokines including granulocyte-macrophage colony-stimulating factor /GM-CSF, granulocyte colony-stimulating factor/G-CSF, IL-1 alpha, IL-1 beta, IL-6, IL-8 and TNF-alpha. Also interferes with antigen presentation by reducing the expression of MHC-class II and co-stimulatory molecules, thereby inhibiting their ability to induce T cell activation. In addition, controls the inflammatory response of macrophages by reprogramming essential metabolic pathways including mTOR signaling. This is Interleukin-10 (IL10) from Papio hamadryas (Hamadryas baboon).